We begin with the raw amino-acid sequence, 249 residues long: Probable transcriptional regulatory protein Psyc_0938 (249 aa).

Belongs to the TACO1 family.

It is found in the cytoplasm. In Psychrobacter arcticus (strain DSM 17307 / VKM B-2377 / 273-4), this protein is Probable transcriptional regulatory protein Psyc_0938.